Here is a 415-residue protein sequence, read N- to C-terminus: Serine hydroxymethyltransferase (415 aa).

Residues Leu120 and 124–126 (GHL) each bind (6S)-5,6,7,8-tetrahydrofolate. Position 229 is an N6-(pyridoxal phosphate)lysine (Lys229).

The protein belongs to the SHMT family. In terms of assembly, homodimer. Requires pyridoxal 5'-phosphate as cofactor.

The protein resides in the cytoplasm. The enzyme catalyses (6R)-5,10-methylene-5,6,7,8-tetrahydrofolate + glycine + H2O = (6S)-5,6,7,8-tetrahydrofolate + L-serine. The protein operates within one-carbon metabolism; tetrahydrofolate interconversion. Its pathway is amino-acid biosynthesis; glycine biosynthesis; glycine from L-serine: step 1/1. Its function is as follows. Catalyzes the reversible interconversion of serine and glycine with tetrahydrofolate (THF) serving as the one-carbon carrier. This reaction serves as the major source of one-carbon groups required for the biosynthesis of purines, thymidylate, methionine, and other important biomolecules. Also exhibits THF-independent aldolase activity toward beta-hydroxyamino acids, producing glycine and aldehydes, via a retro-aldol mechanism. The protein is Serine hydroxymethyltransferase of Caldicellulosiruptor bescii (strain ATCC BAA-1888 / DSM 6725 / KCTC 15123 / Z-1320) (Anaerocellum thermophilum).